Consider the following 413-residue polypeptide: Phosphopentomutase (413 aa).

The Mn(2+) site is built by Asp11, Asp306, His311, Asp347, His348, and His359.

The protein belongs to the phosphopentomutase family. Mn(2+) serves as cofactor.

Its subcellular location is the cytoplasm. The enzyme catalyses 2-deoxy-alpha-D-ribose 1-phosphate = 2-deoxy-D-ribose 5-phosphate. It carries out the reaction alpha-D-ribose 1-phosphate = D-ribose 5-phosphate. The protein operates within carbohydrate degradation; 2-deoxy-D-ribose 1-phosphate degradation; D-glyceraldehyde 3-phosphate and acetaldehyde from 2-deoxy-alpha-D-ribose 1-phosphate: step 1/2. Functionally, isomerase that catalyzes the conversion of deoxy-ribose 1-phosphate (dRib-1-P) and ribose 1-phosphate (Rib-1-P) to deoxy-ribose 5-phosphate (dRib-5-P) and ribose 5-phosphate (Rib-5-P), respectively. The polypeptide is Phosphopentomutase (Helicobacter pylori (strain HPAG1)).